We begin with the raw amino-acid sequence, 238 residues long: Ribonuclease PH (238 aa).

Phosphate-binding positions include R86 and 124-126 (GTR).

The protein belongs to the RNase PH family. As to quaternary structure, homohexameric ring arranged as a trimer of dimers.

It catalyses the reaction tRNA(n+1) + phosphate = tRNA(n) + a ribonucleoside 5'-diphosphate. Phosphorolytic 3'-5' exoribonuclease that plays an important role in tRNA 3'-end maturation. Removes nucleotide residues following the 3'-CCA terminus of tRNAs; can also add nucleotides to the ends of RNA molecules by using nucleoside diphosphates as substrates, but this may not be physiologically important. Probably plays a role in initiation of 16S rRNA degradation (leading to ribosome degradation) during starvation. The sequence is that of Ribonuclease PH from Histophilus somni (strain 2336) (Haemophilus somnus).